Here is a 347-residue protein sequence, read N- to C-terminus: Probable dual-specificity RNA methyltransferase RlmN (347 aa).

Glu-93 (proton acceptor) is an active-site residue. Positions 100–323 (KAKRKTACVS…KKAGLNISTR (224 aa)) constitute a Radical SAM core domain. Cys-107 and Cys-334 are disulfide-bonded. [4Fe-4S] cluster contacts are provided by Cys-114, Cys-118, and Cys-121. Residues 160–161 (GE), Ser-192, 215–217 (SLT), and Asn-291 each bind S-adenosyl-L-methionine. Cys-334 acts as the S-methylcysteine intermediate in catalysis.

The protein belongs to the radical SAM superfamily. RlmN family. The cofactor is [4Fe-4S] cluster.

The protein resides in the cytoplasm. It carries out the reaction adenosine(2503) in 23S rRNA + 2 reduced [2Fe-2S]-[ferredoxin] + 2 S-adenosyl-L-methionine = 2-methyladenosine(2503) in 23S rRNA + 5'-deoxyadenosine + L-methionine + 2 oxidized [2Fe-2S]-[ferredoxin] + S-adenosyl-L-homocysteine. It catalyses the reaction adenosine(37) in tRNA + 2 reduced [2Fe-2S]-[ferredoxin] + 2 S-adenosyl-L-methionine = 2-methyladenosine(37) in tRNA + 5'-deoxyadenosine + L-methionine + 2 oxidized [2Fe-2S]-[ferredoxin] + S-adenosyl-L-homocysteine. In terms of biological role, specifically methylates position 2 of adenine 2503 in 23S rRNA and position 2 of adenine 37 in tRNAs. This Treponema denticola (strain ATCC 35405 / DSM 14222 / CIP 103919 / JCM 8153 / KCTC 15104) protein is Probable dual-specificity RNA methyltransferase RlmN.